The chain runs to 293 residues: DOMON domain-containing protein FRRS1L (293 aa).

A signal peptide spans Met-1–Ala-28. Residues Ser-29–Asp-60 form a disordered region. The segment covering Ala-46–Asp-60 has biased composition (basic and acidic residues). Residues Cys-119 to Ala-234 enclose the DOMON domain. Residues Thr-271–Gly-291 traverse the membrane as a helical segment.

Component of the outer core of AMPAR complex. AMPAR complex consists of an inner core made of 4 pore-forming GluA/GRIA proteins (GRIA1, GRIA2, GRIA3 and GRIA4) and 4 major auxiliary subunits arranged in a twofold symmetry. One of the two pairs of distinct binding sites is occupied either by CNIH2, CNIH3 or CACNG2, CACNG3. The other harbors CACNG2, CACNG3, CACNG4, CACNG8 or GSG1L. This inner core of AMPAR complex is complemented by outer core constituents binding directly to the GluA/GRIA proteins at sites distinct from the interaction sites of the inner core constituents. Outer core constituents include at least PRRT1, PRRT2, CKAMP44/SHISA9, FRRS1L and NRN1. The proteins of the inner and outer core serve as a platform for other, more peripherally associated AMPAR constituents. Alone or in combination, these auxiliary subunits control the gating and pharmacology of the AMPAR complex and profoundly impact their biogenesis and protein processing. As to expression, expressed in the brain (at protein level). In embryos expression is evident in the ventral forebrain, but a lower level is seen in the remainder of the embryos. In the adult brain, expressed in the cortex, cerebellum, hippocampus and basal ganglia.

The protein localises to the cell membrane. Its subcellular location is the synapse. In terms of biological role, important modulator of glutamate signaling pathway. This Mus musculus (Mouse) protein is DOMON domain-containing protein FRRS1L (Frrs1l).